The following is a 411-amino-acid chain: Multifunctional CCA protein (411 aa).

ATP-binding residues include Gly-8 and Arg-11. CTP-binding residues include Gly-8 and Arg-11. Mg(2+) contacts are provided by Glu-21 and Asp-23. ATP-binding residues include Arg-91, Arg-137, and Arg-140. Arg-91, Arg-137, and Arg-140 together coordinate CTP. Positions 228–329 constitute an HD domain; the sequence is TGVHALLALE…LKTLLALDGL (102 aa).

It belongs to the tRNA nucleotidyltransferase/poly(A) polymerase family. Bacterial CCA-adding enzyme type 1 subfamily. As to quaternary structure, monomer. Can also form homodimers and oligomers. Requires Mg(2+) as cofactor. The cofactor is Ni(2+).

The enzyme catalyses a tRNA precursor + 2 CTP + ATP = a tRNA with a 3' CCA end + 3 diphosphate. It catalyses the reaction a tRNA with a 3' CCA end + 2 CTP + ATP = a tRNA with a 3' CCACCA end + 3 diphosphate. Functionally, catalyzes the addition and repair of the essential 3'-terminal CCA sequence in tRNAs without using a nucleic acid template. Adds these three nucleotides in the order of C, C, and A to the tRNA nucleotide-73, using CTP and ATP as substrates and producing inorganic pyrophosphate. tRNA 3'-terminal CCA addition is required both for tRNA processing and repair. Also involved in tRNA surveillance by mediating tandem CCA addition to generate a CCACCA at the 3' terminus of unstable tRNAs. While stable tRNAs receive only 3'-terminal CCA, unstable tRNAs are marked with CCACCA and rapidly degraded. The sequence is that of Multifunctional CCA protein from Teredinibacter turnerae (strain ATCC 39867 / T7901).